Here is a 127-residue protein sequence, read N- to C-terminus: Phosphoribosyl-ATP pyrophosphatase (127 aa).

Belongs to the PRA-PH family.

It localises to the cytoplasm. The catalysed reaction is 1-(5-phospho-beta-D-ribosyl)-ATP + H2O = 1-(5-phospho-beta-D-ribosyl)-5'-AMP + diphosphate + H(+). The protein operates within amino-acid biosynthesis; L-histidine biosynthesis; L-histidine from 5-phospho-alpha-D-ribose 1-diphosphate: step 2/9. The protein is Phosphoribosyl-ATP pyrophosphatase of Polaromonas sp. (strain JS666 / ATCC BAA-500).